The sequence spans 411 residues: Z-DNA-binding protein 1 (411 aa).

2 consecutive Z-binding domains span residues 8-70 (LSTG…SIGG) and 84-148 (SSAQ…HSRQ). Residues K17 and K43 each participate in a glycyl lysine isopeptide (Lys-Gly) (interchain with G-Cter in ubiquitin) cross-link. Positions 60–86 (SPEPATWSIGGAASGDGAPAIPENSSA) are disordered. Short sequence motifs (RIP homotypic interaction motif (RHIM)) lie at residues 188 to 205 (NSNA…REKA) and 237 to 261 (YIYM…LVGD). Disordered stretches follow at residues 263 to 303 (GKHP…EGDT) and 332 to 411 (KGEV…LSKQ). Composition is skewed to polar residues over residues 268 to 292 (YSFS…NMQT), 350 to 371 (GTSS…SMLP), and 400 to 411 (IESSQDTGLSKQ).

As to quaternary structure, homodimer. Interacts (via RIP homotypic interaction motif) with RIPK3; leading to RIPK3 activation and necroptosis; interaction is enhanced by CASP6. Interacts (via RIP homotypic interaction motif) with RIPK1. Component of the AIM2 PANoptosome complex, a multiprotein complex that drives inflammatory cell death (PANoptosis). In terms of assembly, (Microbial infection) Interacts (via RIP homotypic interaction motif) with murid herpesvirus protein RIR1 (via RIP homotypic interaction motif); leading to inhibition of ZBP1-dependent necroptosis. (Microbial infection) Interacts with vaccinia virus E3 protein; leading to inhibit ZBP1-dependent necroptosis. Post-translationally, ubiquitinated; polyubiquitinated following influenza A virus (IAV) infection. In terms of processing, phosphorylated. As to expression, expressed in lung, spleen and liver. Lower levels were seen in heart, kidney and testis. Expression is greatly up-regulated in tumor stromal cells and activated macrophages.

The protein resides in the cytoplasm. Its subcellular location is the nucleus. Its activity is regulated as follows. ZBP1-dependent necroptosis is normally inhibited by RIPK1: RIPK1 inhibits the ZBP1-induced activation of RIPK3 via FADD-mediated recruitment of CASP8, which cleaves RIPK1 and limits TNF-induced necroptosis. Its function is as follows. Key innate sensor that recognizes and binds Z-RNA structures, which are produced by a number of viruses, such as herpesvirus, orthomyxovirus or flavivirus, and triggers different forms of cell death. ZBP1 acts as an essential mediator of pyroptosis, necroptosis and apoptosis (PANoptosis), an integral part of host defense against pathogens, by activating RIPK3, caspase-8 (CASP8), and the NLRP3 inflammasome. Key activator of necroptosis, a programmed cell death process in response to death-inducing TNF-alpha family members, via its ability to bind Z-RNA: once activated upon Z-RNA-binding, ZBP1 interacts and stimulates RIPK3 kinase, which phosphorylates and activates MLKL, triggering execution of programmed necrosis. In addition to TNF-induced necroptosis, necroptosis can also take place in the nucleus in response to orthomyxoviruses infection: ZBP1 recognizes and binds Z-RNA structures that are produced in infected nuclei by orthomyxoviruses, such as the influenza A virus (IAV), leading to ZBP1 activation, RIPK3 stimulation and subsequent MLKL phosphorylation, triggering disruption of the nuclear envelope and leakage of cellular DNA into the cytosol. ZBP1-dependent cell death in response to IAV infection promotes interleukin-1 alpha (IL1A) induction in an NLRP3-inflammasome-independent manner: IL1A expression is required for the optimal interleukin-1 beta (IL1B) production, and together, these cytokines promote infiltration of inflammatory neutrophils to the lung, leading to the formation of neutrophil extracellular traps. In addition to its direct role in driving necroptosis via its ability to sense Z-RNAs, also involved in PANoptosis triggered in response to bacterial infection: component of the AIM2 PANoptosome complex, a multiprotein complex that triggers PANoptosis. Also acts as the apical sensor of fungal infection responsible for activating PANoptosis. Involved in CASP8-mediated cell death via its interaction with RIPK1 but independently of its ability to sense Z-RNAs. In some cell types, also able to restrict viral replication by promoting cell death-independent responses. In response to flavivirus infection in neurons, promotes a cell death-independent pathway that restricts viral replication: together with RIPK3, promotes a death-independent transcriptional program that modifies the cellular metabolism via up-regulation expression of the enzyme ACOD1/IRG1 and production of the metabolite itaconate. Itaconate inhibits the activity of succinate dehydrogenase, generating a metabolic state in neurons that suppresses replication of viral genomes. This is Z-DNA-binding protein 1 from Mus musculus (Mouse).